The chain runs to 314 residues: CD-NTase-associated protein 12 (314 aa).

A TIR domain is found at 5–129 (RIFIGSSSEE…VKGISLARFK (125 aa)). Residues 160 to 314 (SSTLAAVYYE…DLIKIVDEDN (155 aa)) form an STING domain region. F171, P234, and D252 together coordinate 3',3'-c-di-GMP.

This sequence in the C-terminal section; belongs to the bacterial STING family. As to quaternary structure, homodimer. Forms homodimers; in the presence of c-di-GMP forms filaments with an ordered array of parallel-stacked subunits.

It carries out the reaction NAD(+) + H2O = ADP-D-ribose + nicotinamide + H(+). Its activity is regulated as follows. NAD(+) hydrolase activity is strongly stimulated by c-di-GMP, weakly by 3'3'-cGAMP, very weakly by c-di-AMP but not at all by 2'3'-cGAMP. Self-association of TIR domains is required for NADase activity. In terms of biological role, effector protein of a CBASS antiviral system with NAD(+) hydrolase activity. CBASS (cyclic oligonucleotide-based antiphage signaling system) provides immunity against bacteriophage. The CD-NTase protein synthesizes cyclic nucleotides in response to infection; these serve as specific second messenger signals. The signals activate a diverse range of effectors, leading to bacterial cell death and thus abortive phage infection. A type I-(GG) CBASS system. Binds c-di-GMP (synthesized by the cognate CdnE encoded upstream in the same operon), and about 10-fold less well 3'3'-cGAMP, but not c-di-AMP, 2'-3'-cGAMP or cUMP-AMP (tested without the N-terminal TIR domain). Upon activation by c-di-GMP forms filaments which hydrolyze NAD(+); filament formation is required for enzyme activation. This chain is CD-NTase-associated protein 12, found in Capnocytophaga granulosa (strain ATCC 51502 / DSM 11449 / JCM 8566 / LMG 16022 / NCTC 12948 / B0611).